The sequence spans 245 residues: 5-oxoprolinase subunit A (245 aa).

Belongs to the LamB/PxpA family. In terms of assembly, forms a complex composed of PxpA, PxpB and PxpC.

It carries out the reaction 5-oxo-L-proline + ATP + 2 H2O = L-glutamate + ADP + phosphate + H(+). Functionally, catalyzes the cleavage of 5-oxoproline to form L-glutamate coupled to the hydrolysis of ATP to ADP and inorganic phosphate. In Cronobacter sakazakii (strain ATCC BAA-894) (Enterobacter sakazakii), this protein is 5-oxoprolinase subunit A.